The primary structure comprises 389 residues: 1-deoxy-D-xylulose 5-phosphate reductoisomerase (389 aa).

Ser-11, Gly-12, Ser-13, Val-14, Asn-39, and Asn-122 together coordinate NADPH. Lys-123 contacts 1-deoxy-D-xylulose 5-phosphate. Glu-124 provides a ligand contact to NADPH. Residue Asp-148 participates in Mn(2+) binding. Positions 149, 150, 174, and 197 each coordinate 1-deoxy-D-xylulose 5-phosphate. Glu-150 serves as a coordination point for Mn(2+). Gly-203 provides a ligand contact to NADPH. 4 residues coordinate 1-deoxy-D-xylulose 5-phosphate: Ser-210, Asn-215, Lys-216, and Glu-219. Glu-219 contributes to the Mn(2+) binding site.

The protein belongs to the DXR family. Mg(2+) serves as cofactor. It depends on Mn(2+) as a cofactor.

It catalyses the reaction 2-C-methyl-D-erythritol 4-phosphate + NADP(+) = 1-deoxy-D-xylulose 5-phosphate + NADPH + H(+). The protein operates within isoprenoid biosynthesis; isopentenyl diphosphate biosynthesis via DXP pathway; isopentenyl diphosphate from 1-deoxy-D-xylulose 5-phosphate: step 1/6. In terms of biological role, catalyzes the NADPH-dependent rearrangement and reduction of 1-deoxy-D-xylulose-5-phosphate (DXP) to 2-C-methyl-D-erythritol 4-phosphate (MEP). This chain is 1-deoxy-D-xylulose 5-phosphate reductoisomerase, found in Leptospira interrogans serogroup Icterohaemorrhagiae serovar Lai (strain 56601).